We begin with the raw amino-acid sequence, 206 residues long: Riboflavin transporter RibU (206 aa).

A run of 6 helical transmembrane segments spans residues 7–27 (MVLI…ILQF), 42–62 (IIPV…IILF), 79–99 (WIGV…VWFF), 113–133 (IVLA…FYAL), 147–169 (IFAG…PTYL), and 173–195 (VLPF…VTVF).

This sequence belongs to the prokaryotic riboflavin transporter (P-RFT) (TC 2.A.87) family. As to quaternary structure, in E.coli forms a stable energy-coupling factor (ECF) transporter complex composed of 2 membrane-embedded substrate-binding protein (S component), 2 ATP-binding proteins (A and A' components) and 2 transmembrane proteins (T component), probably with a stoichiometry of 2:1:1:2. May be able to interact with more than 1 S component at a time.

The protein localises to the cell membrane. Functionally, mediates riboflavin uptake, may also transport FMN and roseoflavin. Probably a riboflavin-binding protein that interacts with the energy-coupling factor (ECF) ABC-transporter complex. Unlike classic ABC transporters this ECF transporter provides the energy necessary to transport a number of different substrates. The substrates themselves are bound by transmembrane, not extracytoplasmic soluble proteins. Uptake of riboflavin into proteosomes containing EcfA1A2T and RibU has been demonstrated. Uptake requires hydrolyzable Mg-ATP. This Lactococcus lactis subsp. cremoris (strain MG1363) protein is Riboflavin transporter RibU (ribU).